Consider the following 320-residue polypeptide: N-acetylneuraminate lyase (320 aa).

Residues Thr-51 and Thr-52 each coordinate aceneuramate. Tyr-143 acts as the Proton donor in catalysis. Lys-173 acts as the Schiff-base intermediate with substrate in catalysis. Ser-175, Gly-199, Asp-201, Glu-202, and Ser-218 together coordinate aceneuramate.

This sequence belongs to the DapA family. NanA subfamily. As to quaternary structure, homotetramer.

Its subcellular location is the cytoplasm. The enzyme catalyses aceneuramate = aldehydo-N-acetyl-D-mannosamine + pyruvate. The protein operates within amino-sugar metabolism; N-acetylneuraminate degradation. Catalyzes the cleavage of N-acetylneuraminic acid (sialic acid) to form pyruvate and N-acetylmannosamine via a Schiff base intermediate. It prevents sialic acids from being recycled and returning to the cell surface. Involved in the N-glycolylneuraminic acid (Neu5Gc) degradation pathway. The polypeptide is N-acetylneuraminate lyase (Rattus norvegicus (Rat)).